A 516-amino-acid chain; its full sequence is Putative Rieske 2Fe-2S iron-sulfur protein MT3926 (516 aa).

The Rieske domain maps to 429 to 516; the sequence is LYTFFKCLTD…RGHQLRSSRP (88 aa). Residues C469, H471, C489, and H492 each coordinate [2Fe-2S] cluster.

[2Fe-2S] cluster is required as a cofactor.

This is Putative Rieske 2Fe-2S iron-sulfur protein MT3926 from Mycobacterium tuberculosis (strain CDC 1551 / Oshkosh).